Consider the following 1396-residue polypeptide: ATP-dependent helicase/nuclease subunit A (1396 aa).

Residues 1–25 (MNREALCHDDPIGHDRLRPDSIPRD) form a disordered region. One can recognise a UvrD-like helicase ATP-binding domain in the interval 26 to 532 (PKWTDEQWQA…IDLAKNFRSR (507 aa)). Position 47–54 (47–54 (AAAGAGKT)) interacts with ATP. Disordered regions lie at residues 590 to 649 (DADG…GQPT) and 1171 to 1205 (HSPE…PSPD). In terms of domain architecture, UvrD-like helicase C-terminal spans 615-920 (HKNIAKAGES…RIMSIHKSKG (306 aa)). A compositionally biased stretch (low complexity) spans 1181 to 1199 (TPPSLEIPPSLETPPSLET).

The protein belongs to the helicase family. AddA subfamily. Heterodimer of AddA and AddB/RexB. Mg(2+) serves as cofactor.

It carries out the reaction Couples ATP hydrolysis with the unwinding of duplex DNA by translocating in the 3'-5' direction.. The catalysed reaction is ATP + H2O = ADP + phosphate + H(+). The heterodimer acts as both an ATP-dependent DNA helicase and an ATP-dependent, dual-direction single-stranded exonuclease. Recognizes the chi site generating a DNA molecule suitable for the initiation of homologous recombination. The AddA nuclease domain is required for chi fragment generation; this subunit has the helicase and 3' -&gt; 5' nuclease activities. In Heliobacterium modesticaldum (strain ATCC 51547 / Ice1), this protein is ATP-dependent helicase/nuclease subunit A.